The following is a 232-amino-acid chain: 26S proteasome non-ATPase regulatory subunit 10 (232 aa).

ANK repeat units lie at residues 45–75, 79–108, 112–141, 144–173, 177–206, and 210–232; these read DERT…SPNT, GGWT…DPNT, SKRT…KNRK, TGSA…NINS, EGDT…DTTI, and DSKT…EFKK.

Functionally, acts as a chaperone during the assembly of the 26S proteasome, specifically of the 19S regulatory complex (RC). The chain is 26S proteasome non-ATPase regulatory subunit 10 (psmD10) from Dictyostelium discoideum (Social amoeba).